Consider the following 251-residue polypeptide: Imidazole glycerol phosphate synthase subunit HisF (251 aa).

Catalysis depends on residues Asp11 and Asp130.

Belongs to the HisA/HisF family. As to quaternary structure, heterodimer of HisH and HisF.

The protein localises to the cytoplasm. The catalysed reaction is 5-[(5-phospho-1-deoxy-D-ribulos-1-ylimino)methylamino]-1-(5-phospho-beta-D-ribosyl)imidazole-4-carboxamide + L-glutamine = D-erythro-1-(imidazol-4-yl)glycerol 3-phosphate + 5-amino-1-(5-phospho-beta-D-ribosyl)imidazole-4-carboxamide + L-glutamate + H(+). The protein operates within amino-acid biosynthesis; L-histidine biosynthesis; L-histidine from 5-phospho-alpha-D-ribose 1-diphosphate: step 5/9. IGPS catalyzes the conversion of PRFAR and glutamine to IGP, AICAR and glutamate. The HisF subunit catalyzes the cyclization activity that produces IGP and AICAR from PRFAR using the ammonia provided by the HisH subunit. This chain is Imidazole glycerol phosphate synthase subunit HisF, found in Metallosphaera sedula (strain ATCC 51363 / DSM 5348 / JCM 9185 / NBRC 15509 / TH2).